Consider the following 30-residue polypeptide: Trypsin inhibitor 4 (30 aa).

Intrachain disulfides connect C3–C20, C10–C22, and C16–C28.

Belongs to the protease inhibitor I7 (squash-type serine protease inhibitor) family.

The protein localises to the secreted. Functionally, inhibits trypsin; probably participates in a plant defense mechanism. The protein is Trypsin inhibitor 4 of Momordica charantia (Bitter gourd).